We begin with the raw amino-acid sequence, 141 residues long: Large ribosomal subunit protein uL11 (141 aa).

Belongs to the universal ribosomal protein uL11 family. As to quaternary structure, part of the ribosomal stalk of the 50S ribosomal subunit. Interacts with L10 and the large rRNA to form the base of the stalk. L10 forms an elongated spine to which L12 dimers bind in a sequential fashion forming a multimeric L10(L12)X complex. Post-translationally, one or more lysine residues are methylated.

In terms of biological role, forms part of the ribosomal stalk which helps the ribosome interact with GTP-bound translation factors. This is Large ribosomal subunit protein uL11 from Clostridium tetani (strain Massachusetts / E88).